We begin with the raw amino-acid sequence, 313 residues long: Ribosomal RNA small subunit methyltransferase H (313 aa).

Residues 34-36, aspartate 53, phenylalanine 80, aspartate 101, and glutamine 108 each bind S-adenosyl-L-methionine; that span reads GGH.

This sequence belongs to the methyltransferase superfamily. RsmH family.

Its subcellular location is the cytoplasm. The catalysed reaction is cytidine(1402) in 16S rRNA + S-adenosyl-L-methionine = N(4)-methylcytidine(1402) in 16S rRNA + S-adenosyl-L-homocysteine + H(+). Its function is as follows. Specifically methylates the N4 position of cytidine in position 1402 (C1402) of 16S rRNA. The sequence is that of Ribosomal RNA small subunit methyltransferase H from Lacticaseibacillus paracasei (strain ATCC 334 / BCRC 17002 / CCUG 31169 / CIP 107868 / KCTC 3260 / NRRL B-441) (Lactobacillus paracasei).